The sequence spans 313 residues: Urease accessory protein UreD (313 aa).

Positions 1-30 are disordered; the sequence is MTDLSFPGQAASPGEGAGQTPSGGSGHRFD. The span at 15-26 shows a compositional bias: gly residues; that stretch reads EGAGQTPSGGSG.

Belongs to the UreD family. As to quaternary structure, ureD, UreF and UreG form a complex that acts as a GTP-hydrolysis-dependent molecular chaperone, activating the urease apoprotein by helping to assemble the nickel containing metallocenter of UreC. The UreE protein probably delivers the nickel.

It localises to the cytoplasm. Functionally, required for maturation of urease via the functional incorporation of the urease nickel metallocenter. The sequence is that of Urease accessory protein UreD from Chromohalobacter salexigens (strain ATCC BAA-138 / DSM 3043 / CIP 106854 / NCIMB 13768 / 1H11).